The following is a 434-amino-acid chain: Pre-B-cell leukemia transcription factor 3 (434 aa).

Positions 20-41 (SVQGGMALPPPPHGHEGADGDG) are disordered. The segment covering 32-41 (HGHEGADGDG) has biased composition (basic and acidic residues). In terms of domain architecture, PBC spans 41–234 (GRKQDIGDIL…VMILRSRFLD (194 aa)). A PBC-A region spans residues 48–127 (DILHQIMTIT…EGVSGPEKGG (80 aa)). The segment at 130–234 (AAAAAAAAAS…VMILRSRFLD (105 aa)) is PBC-B. A DNA-binding region (homeobox; TALE-type) is located at residues 235–297 (ARRKRRNFSK…NKRIRYKKNI (63 aa)). Positions 326 to 341 (NQTNSPTTPNSGSSGS) are enriched in low complexity. Disordered stretches follow at residues 326–349 (NQTN…NSGD) and 403–434 (LNAN…DTSN). Polar residues predominate over residues 403–422 (LNANGGWQDATTPSSVTSPT).

Belongs to the TALE/PBX homeobox family. Interacts with PBXIP1. As to expression, ubiquitously expressed.

It localises to the nucleus. Its function is as follows. Transcriptional activator that binds the sequence 5'-ATCAATCAA-3'. The chain is Pre-B-cell leukemia transcription factor 3 (PBX3) from Homo sapiens (Human).